The primary structure comprises 282 residues: ATP synthase gamma chain (282 aa).

Belongs to the ATPase gamma chain family. In terms of assembly, F-type ATPases have 2 components, CF(1) - the catalytic core - and CF(0) - the membrane proton channel. CF(1) has five subunits: alpha(3), beta(3), gamma(1), delta(1), epsilon(1). CF(0) has three main subunits: a, b and c.

Its subcellular location is the cell membrane. Its function is as follows. Produces ATP from ADP in the presence of a proton gradient across the membrane. The gamma chain is believed to be important in regulating ATPase activity and the flow of protons through the CF(0) complex. This chain is ATP synthase gamma chain, found in Clostridium botulinum (strain Loch Maree / Type A3).